The chain runs to 272 residues: Petrobactin import ATP-binding protein FpuC (272 aa).

The 237-residue stretch at 2–238 (ISVNKVFYAH…EMFQHIFGIE (237 aa)) folds into the ABC transporter domain. 34-41 (GPNGSGKS) serves as a coordination point for ATP.

The protein belongs to the ABC transporter superfamily. As to quaternary structure, the complex is composed of two ATP-binding proteins (FpuC), two transmembrane proteins (FpuB) and a solute-binding protein (FpuA).

Its subcellular location is the cell membrane. The enzyme catalyses a Fe(III)-siderophore(out) + ATP + H2O = a Fe(III)-siderophore(in) + ADP + phosphate + H(+). In terms of biological role, part of an ABC transporter complex involved in ferric-petrobactin uptake. Probably responsible for energy coupling to the transport system. This Bacillus anthracis protein is Petrobactin import ATP-binding protein FpuC.